A 90-amino-acid polypeptide reads, in one-letter code: Small ribosomal subunit protein bS20 (90 aa).

Positions 1–25 (MANSPSAKKRAKQAEKRRSHNASLR) are disordered. A compositionally biased stretch (basic residues) spans 7–20 (AKKRAKQAEKRRSH).

Belongs to the bacterial ribosomal protein bS20 family.

Its function is as follows. Binds directly to 16S ribosomal RNA. This Pseudomonas fluorescens (strain Pf0-1) protein is Small ribosomal subunit protein bS20.